Reading from the N-terminus, the 538-residue chain is Mevalonate kinase erg12 (538 aa).

The interval 1–87 is disordered; the sequence is MGNPRGRRTN…RNMSRKPSSP (87 aa). Residues 9–29 are compositionally biased toward polar residues; sequence TNGSIKTSKGTQRGTVSNLLS. A compositionally biased stretch (low complexity) spans 57–69; the sequence is TTPSTTESTLKTT. Residues K99, S231, and 236–242 contribute to the ATP site; that span reads GAGLGSS. The Mg(2+) site is built by S242 and E287. Residue D298 is the Proton acceptor of the active site.

The protein belongs to the GHMP kinase family. Mevalonate kinase subfamily. Homodimer. Mg(2+) is required as a cofactor.

Its subcellular location is the cytoplasm. It is found in the cytosol. The catalysed reaction is (R)-mevalonate + ATP = (R)-5-phosphomevalonate + ADP + H(+). It functions in the pathway isoprenoid biosynthesis; isopentenyl diphosphate biosynthesis via mevalonate pathway; isopentenyl diphosphate from (R)-mevalonate: step 1/3. Its function is as follows. Mevalonate kinase; part of the second module of ergosterol biosynthesis pathway that includes the middle steps of the pathway. Erg12 converts mevalonate into 5-phosphomevalonate. The second module is carried out in the vacuole and involves the formation of farnesyl diphosphate, which is also an important intermediate in the biosynthesis of ubiquinone, dolichol, heme and prenylated proteins. Activity by the mevalonate kinase erg12 (AFUA_4G07780) first converts mevalonate into 5-phosphomevalonate. 5-phosphomevalonate is then further converted to 5-diphosphomevalonate by the phosphomevalonate kinase erg8 (AFUA_5G10680). The diphosphomevalonate decarboxylase mvd1 (AFUA_4G07130) then produces isopentenyl diphosphate. The isopentenyl-diphosphate delta-isomerase idi1 (AFUA_6G11160) then catalyzes the 1,3-allylic rearrangement of the homoallylic substrate isopentenyl (IPP) to its highly electrophilic allylic isomer, dimethylallyl diphosphate (DMAPP). Finally the farnesyl diphosphate synthase erg20 (AFUA_5G02450) catalyzes the sequential condensation of isopentenyl pyrophosphate with dimethylallyl pyrophosphate, and then with the resultant geranylpyrophosphate to the ultimate product farnesyl pyrophosphate. The chain is Mevalonate kinase erg12 from Aspergillus fumigatus (strain ATCC MYA-4609 / CBS 101355 / FGSC A1100 / Af293) (Neosartorya fumigata).